A 204-amino-acid chain; its full sequence is Methylthioribulose-1-phosphate dehydratase (204 aa).

Positions 96 and 98 each coordinate Zn(2+).

It belongs to the aldolase class II family. MtnB subfamily. Requires Zn(2+) as cofactor.

The enzyme catalyses 5-(methylsulfanyl)-D-ribulose 1-phosphate = 5-methylsulfanyl-2,3-dioxopentyl phosphate + H2O. Its pathway is amino-acid biosynthesis; L-methionine biosynthesis via salvage pathway; L-methionine from S-methyl-5-thio-alpha-D-ribose 1-phosphate: step 2/6. In terms of biological role, catalyzes the dehydration of methylthioribulose-1-phosphate (MTRu-1-P) into 2,3-diketo-5-methylthiopentyl-1-phosphate (DK-MTP-1-P). This Methylococcus capsulatus (strain ATCC 33009 / NCIMB 11132 / Bath) protein is Methylthioribulose-1-phosphate dehydratase.